The chain runs to 579 residues: 2-succinyl-5-enolpyruvyl-6-hydroxy-3-cyclohexene-1-carboxylate synthase (579 aa).

It belongs to the TPP enzyme family. MenD subfamily. In terms of assembly, homodimer. It depends on Mg(2+) as a cofactor. Mn(2+) serves as cofactor. Requires thiamine diphosphate as cofactor.

It carries out the reaction isochorismate + 2-oxoglutarate + H(+) = 5-enolpyruvoyl-6-hydroxy-2-succinyl-cyclohex-3-ene-1-carboxylate + CO2. It functions in the pathway quinol/quinone metabolism; 1,4-dihydroxy-2-naphthoate biosynthesis; 1,4-dihydroxy-2-naphthoate from chorismate: step 2/7. Its pathway is quinol/quinone metabolism; menaquinone biosynthesis. In terms of biological role, catalyzes the thiamine diphosphate-dependent decarboxylation of 2-oxoglutarate and the subsequent addition of the resulting succinic semialdehyde-thiamine pyrophosphate anion to isochorismate to yield 2-succinyl-5-enolpyruvyl-6-hydroxy-3-cyclohexene-1-carboxylate (SEPHCHC). The polypeptide is 2-succinyl-5-enolpyruvyl-6-hydroxy-3-cyclohexene-1-carboxylate synthase (Shewanella frigidimarina (strain NCIMB 400)).